We begin with the raw amino-acid sequence, 101 residues long: Protein Tat (101 aa).

Over residues Met-1–Lys-12 the composition is skewed to basic and acidic residues. The tract at residues Met-1–Thr-20 is disordered. Positions Met-1 to Thr-24 are interaction with human CREBBP. A transactivation region spans residues Met-1 to Gly-48. Zn(2+) contacts are provided by Cys-22, Cys-25, and Cys-27. Residues Cys-22 to Cys-37 form a cysteine-rich region. Lys-28 is modified (N6-acetyllysine; by host PCAF). The Zn(2+) site is built by Cys-30, His-33, Cys-34, and Cys-37. Residues Phe-38–Gly-48 form a core region. A disordered region spans residues Tyr-47–Asp-101. The Nuclear localization signal, RNA-binding (TAR), and protein transduction motif lies at Arg-49 to Arg-57. The interaction with the host capping enzyme RNGTT stretch occupies residues Arg-49–Glu-86. 2 positions are modified to N6-acetyllysine; by host EP300 and GCN5L2: Lys-50 and Lys-51. Asymmetric dimethylarginine; by host PRMT6 occurs at positions 52 and 53. Lys-71 is covalently cross-linked (Glycyl lysine isopeptide (Lys-Gly) (interchain with G-Cter in ubiquitin)). A Cell attachment site motif is present at residues Arg-78–Asp-80. Residues Gly-83–Asp-101 are compositionally biased toward basic and acidic residues.

The protein belongs to the lentiviruses Tat family. As to quaternary structure, interacts with host CCNT1. Associates with the P-TEFb complex composed at least of Tat, P-TEFb (CDK9 and CCNT1), TAR RNA, RNA Pol II. Recruits the HATs CREBBP, TAF1/TFIID, EP300, PCAF and GCN5L2. Interacts with host KAT5/Tip60; this interaction targets the latter to degradation. Interacts with the host deacetylase SIRT1. Interacts with host capping enzyme RNGTT; this interaction stimulates RNGTT. Binds to host KDR, and to the host integrins ITGAV/ITGB3 and ITGA5/ITGB1. Interacts with host KPNB1/importin beta-1 without previous binding to KPNA1/importin alpha-1. Interacts with EIF2AK2. Interacts with host nucleosome assembly protein NAP1L1; this interaction may be required for the transport of Tat within the nucleus, since the two proteins interact at the nuclear rim. Interacts with host C1QBP/SF2P32; this interaction involves lysine-acetylated Tat. Interacts with the host chemokine receptors CCR2, CCR3 and CXCR4. Interacts with host DPP4/CD26; this interaction may trigger an anti-proliferative effect. Interacts with host LDLR. Interacts with the host extracellular matrix metalloproteinase MMP1. Interacts with host PRMT6; this interaction mediates Tat's methylation. Interacts with, and is ubiquitinated by MDM2/Hdm2. Interacts with host PSMC3 and HTATIP2. Interacts with STAB1; this interaction may overcome SATB1-mediated repression of IL2 and IL2RA (interleukin) in T cells by binding to the same domain than HDAC1. Interacts (when acetylated) with human CDK13, thereby increasing HIV-1 mRNA splicing and promoting the production of the doubly spliced HIV-1 protein Nef. Interacts with host TBP; this interaction modulates the activity of transcriptional pre-initiation complex. Interacts with host RELA. Interacts with host PLSCR1; this interaction negatively regulates Tat transactivation activity by altering its subcellular distribution. In terms of processing, asymmetrical arginine methylation by host PRMT6 seems to diminish the transactivation capacity of Tat and affects the interaction with host CCNT1. Acetylation by EP300, CREBBP, GCN5L2/GCN5 and PCAF regulates the transactivation activity of Tat. EP300-mediated acetylation of Lys-50 promotes dissociation of Tat from the TAR RNA through the competitive binding to PCAF's bromodomain. In addition, the non-acetylated Tat's N-terminus can also interact with PCAF. PCAF-mediated acetylation of Lys-28 enhances Tat's binding to CCNT1. Lys-50 is deacetylated by SIRT1. Post-translationally, polyubiquitination by host MDM2 does not target Tat to degradation, but activates its transactivation function and fosters interaction with CCNT1 and TAR RNA. In terms of processing, phosphorylated by EIF2AK2 on serine and threonine residues adjacent to the basic region important for TAR RNA binding and function. Phosphorylation of Tat by EIF2AK2 is dependent on the prior activation of EIF2AK2 by dsRNA.

Its subcellular location is the host nucleus. The protein resides in the host nucleolus. It localises to the host cytoplasm. The protein localises to the secreted. Transcriptional activator that increases RNA Pol II processivity, thereby increasing the level of full-length viral transcripts. Recognizes a hairpin structure at the 5'-LTR of the nascent viral mRNAs referred to as the transactivation responsive RNA element (TAR) and recruits the cyclin T1-CDK9 complex (P-TEFb complex) that will in turn hyperphosphorylate the RNA polymerase II to allow efficient elongation. The CDK9 component of P-TEFb and other Tat-activated kinases hyperphosphorylate the C-terminus of RNA Pol II that becomes stabilized and much more processive. Other factors such as HTATSF1/Tat-SF1, SUPT5H/SPT5, and HTATIP2 are also important for Tat's function. Besides its effect on RNA Pol II processivity, Tat induces chromatin remodeling of proviral genes by recruiting the histone acetyltransferases (HATs) CREBBP, EP300 and PCAF to the chromatin. This also contributes to the increase in proviral transcription rate, especially when the provirus integrates in transcriptionally silent region of the host genome. To ensure maximal activation of the LTR, Tat mediates nuclear translocation of NF-kappa-B by interacting with host RELA. Through its interaction with host TBP, Tat may also modulate transcription initiation. Tat can reactivate a latently infected cell by penetrating in it and transactivating its LTR promoter. In the cytoplasm, Tat is thought to act as a translational activator of HIV-1 mRNAs. In terms of biological role, extracellular circulating Tat can be endocytosed by surrounding uninfected cells via the binding to several surface receptors such as CD26, CXCR4, heparan sulfate proteoglycans (HSPG) or LDLR. Neurons are rarely infected, but they internalize Tat via their LDLR. Through its interaction with nuclear HATs, Tat is potentially able to control the acetylation-dependent cellular gene expression. Modulates the expression of many cellular genes involved in cell survival, proliferation or in coding for cytokines or cytokine receptors. Tat plays a role in T-cell and neurons apoptosis. Tat induced neurotoxicity and apoptosis probably contribute to neuroAIDS. Circulating Tat also acts as a chemokine-like and/or growth factor-like molecule that binds to specific receptors on the surface of the cells, affecting many cellular pathways. In the vascular system, Tat binds to ITGAV/ITGB3 and ITGA5/ITGB1 integrins dimers at the surface of endothelial cells and competes with bFGF for heparin-binding sites, leading to an excess of soluble bFGF. The polypeptide is Protein Tat (Human immunodeficiency virus type 1 group M subtype B (isolate MN) (HIV-1)).